The following is a 307-amino-acid chain: tRNA dimethylallyltransferase (307 aa).

Gly8 to Ser15 serves as a coordination point for ATP. A substrate-binding site is contributed by Thr10–Ser15. Residues Asp33–Gln36 are interaction with substrate tRNA.

This sequence belongs to the IPP transferase family. In terms of assembly, monomer. Mg(2+) serves as cofactor.

The enzyme catalyses adenosine(37) in tRNA + dimethylallyl diphosphate = N(6)-dimethylallyladenosine(37) in tRNA + diphosphate. Its function is as follows. Catalyzes the transfer of a dimethylallyl group onto the adenine at position 37 in tRNAs that read codons beginning with uridine, leading to the formation of N6-(dimethylallyl)adenosine (i(6)A). The sequence is that of tRNA dimethylallyltransferase from Solibacter usitatus (strain Ellin6076).